The primary structure comprises 488 residues: 5'-3' exonuclease PLD3 (488 aa).

The Cytoplasmic segment spans residues 1-38; the sequence is MKPKLMYQELKVPVEEPAGELPMNEIEAWKAAEKKARW. Residues 39–59 traverse the membrane as a helical; Signal-anchor for type II membrane protein segment; it reads VLLVLILAVVGFGALMTQLFL. Over 60 to 488 the chain is Lumenal; that stretch reads WEYGDLHLFG…DSVGNACRLL (429 aa). 2 disulfide bridges follow: Cys-77–Cys-237 and Cys-81–Cys-235. N-linked (GlcNAc...) asparagine glycans are attached at residues Asn-97 and Asn-132. Residues 194–221 enclose the PLD phosphodiesterase 1 domain; the sequence is THGVLHTKFWVVDQTHFYLGSANMDWRS. Residues His-199, Lys-201, and Asp-206 contribute to the active site. His-199 serves as the catalytic Proton donor. Phosphate-binding residues include His-199 and Lys-201. Asn-216 is a binding site for phosphate. N-linked (GlcNAc...) asparagine glycosylation is found at Asn-234, Asn-282, and Asn-385. Residues Cys-364 and Cys-485 are joined by a disulfide bond. The 27-residue stretch at 409–435 folds into the PLD phosphodiesterase 2 domain; sequence YARVNHNKYMVTERTTYIGTSNWSGSY. His-414 provides a ligand contact to phosphate. The Nucleophile role is filled by His-414. A Mg(2+)-binding site is contributed by Phe-436.

Belongs to the phospholipase D family. In terms of assembly, homodimer. Interacts with APP. In terms of processing, N-glycosylated. Proteolytically processed to a soluble form that is stable within endosomes and lysosomes. During transport through the secretory pathway becomes proteolysed by cysteine proteases, thereby releasing a stable soluble lysosomal lumenal polypeptide, whereas the transmembrane-bound fragment is rapidly degraded. Its transport route to lysosomes involves ubiquitination and the ESCRT complex. Post-translationally, ubiquitinated. Ubiquitination mediates sorting into lysosomes.

The protein resides in the endoplasmic reticulum membrane. Its subcellular location is the lysosome lumen. It localises to the early endosome membrane. The protein localises to the late endosome membrane. It is found in the golgi apparatus membrane. The protein resides in the endosome membrane. It catalyses the reaction Exonucleolytic cleavage in the 5'- to 3'-direction to yield nucleoside 3'-phosphates.. The catalysed reaction is a 5'-end 5'-dephospho-ribonucleotidyl-ribonucleotide-RNA + H2O = a ribonucleoside 3'-phosphate + a 5'-end dephospho-ribonucleoside-RNA + H(+). It carries out the reaction a ribonucleoside 3'-phosphate-2'-3'-cyclophospho-GMP + H2O = a ribonucleoside 3'-phosphate + 2',3'-cyclophospho-GMP + H(+). The enzyme catalyses a 5'-end 5'-dephospho-2'-deoxyribonucleotidyl-2'-deoxyribonucleotide in single-stranded DNA + H2O = a 5'-end dephospho-2'-deoxyribonucleoside in single-stranded DNA + a 2'-deoxyribonucleoside 3'-phosphate + H(+). It catalyses the reaction a 5'-end 5'-phospho-2'-deoxyribonucleotide in single-stranded DNA + H2O = a 5'-end 5'-dephospho-2'-deoxyribonucleotide in single-stranded DNA + phosphate. The catalysed reaction is a 3-lyso-sn-glycero-1-phospho-(3'-acyl-1'-sn-glycerol) + a 1-acyl-sn-glycerol = a 3-acyl-sn-glycero-1-phospho-(3'-acyl-1'-sn-glycerol) + glycerol. It carries out the reaction 3-lyso-sn-glycero-1-phospho-(3'-(9Z-octadecenoyl)-1'-sn-glycerol) + 1-(9Z-octadecenoyl)-sn-glycerol = 3-(9Z-octadecenoyl)-sn-glycero-1-phospho-(3'-(9Z-octadecenoyl)-1'-sn-glycerol) + glycerol. 5'-&gt;3' exonuclease that hydrolyzes the phosphodiester bond of single-stranded DNA (ssDNA) and RNA molecules to form nucleoside 3'-monophosphates and 5'-end 5'-hydroxy deoxyribonucleotide/ribonucleotide fragments. Partially redundant with PLD4, can cleave all four nucleotides displaying higher efficiency for ssDNA and RNA fragments initiated with uridine and guanosine residues and lower efficiency for cytidine-initiated substrates. As a result, it does not always degrade polynucleotides to the single nucleotide level, it can stall at specific sites sparing certain fragments from exonucleolytic degradation. Processes self and pathogenic ssDNA and RNA molecules that reach the endolysosomal compartment via phagocytosis or autophagy and may serve as 'danger' signals for recognition by innate immune receptors such as toll-like receptors (TLRs). Degrades mitochondrial CpG-rich ssDNA fragments to prevent TLR9 activation and autoinflammatory response, but it can cleave viral RNA to generate ligands for TLR7 activation and initiate antiviral immune responses. In plasmacytoid dendritic cells, it cooperates with endonuclease RNASET2 to release 2',3'-cyclic guanosine monophosphate (2',3'-cGMP), a potent stimulatory ligand for TLR7. Produces 2',3'-cGMPs and cytidine-rich RNA fragments that occupy TLR7 ligand-binding pockets and trigger a signaling-competent state. Can exert polynucleotide phosphatase activity toward 5'-phosphorylated ssDNA substrates although at a slow rate. Transphosphatidylase that catalyzes the exchange with R to S stereo-inversion of the glycerol moiety between (S,R)-lysophosphatidylglycerol (LPG) and monoacylglycerol (MAG) substrates to yield (S,S)-bis(monoacylglycero)phosphate (BMP). Can synthesize a variety of (S,S)-BMPs representing the main phospholipid constituent of lysosomal intralumenal vesicle (ILV) membranes that bind acid hydrolases for lipid degradation. Regulates the homeostasis and interorganellar communication of the endolysosomal system with an overall impact on cellular removal of dysfunctional organelles via autophagy as well as proper protein and lipid turnover. May play a role in myotube formation in response to ER stress. The sequence is that of 5'-3' exonuclease PLD3 (Pld3) from Rattus norvegicus (Rat).